We begin with the raw amino-acid sequence, 869 residues long: Aconitate hydratase A (869 aa).

Residues Cys411, Cys477, and Cys480 each contribute to the [4Fe-4S] cluster site.

This sequence belongs to the aconitase/IPM isomerase family. In terms of assembly, monomer. [4Fe-4S] cluster serves as cofactor.

The catalysed reaction is citrate = D-threo-isocitrate. The enzyme catalyses (2S,3R)-3-hydroxybutane-1,2,3-tricarboxylate = 2-methyl-cis-aconitate + H2O. It functions in the pathway carbohydrate metabolism; tricarboxylic acid cycle; isocitrate from oxaloacetate: step 2/2. Its pathway is organic acid metabolism; propanoate degradation. In terms of biological role, involved in the catabolism of short chain fatty acids (SCFA) via the tricarboxylic acid (TCA)(acetyl degradation route) and the 2-methylcitrate cycle I (propionate degradation route). Catalyzes the reversible isomerization of citrate to isocitrate via cis-aconitate. Could catalyze the hydration of 2-methyl-cis-aconitate to yield (2S,3R)-2-methylisocitrate. The apo form of AcnA functions as a RNA-binding regulatory protein. This is Aconitate hydratase A from Cupriavidus necator (Alcaligenes eutrophus).